Here is a 185-residue protein sequence, read N- to C-terminus: Ribosome-recycling factor (185 aa).

Belongs to the RRF family.

It localises to the cytoplasm. In terms of biological role, responsible for the release of ribosomes from messenger RNA at the termination of protein biosynthesis. May increase the efficiency of translation by recycling ribosomes from one round of translation to another. This chain is Ribosome-recycling factor, found in Brevibacillus brevis (strain 47 / JCM 6285 / NBRC 100599).